Here is a 332-residue protein sequence, read N- to C-terminus: 2,3-diketo-L-gulonate reductase (332 aa).

Histidine 44 (proton donor) is an active-site residue. Residues 168–174 (ITMVDMS), 224–225 (WK), and 304–306 (GHE) each bind NAD(+).

It belongs to the LDH2/MDH2 oxidoreductase family. DlgD subfamily. In terms of assembly, homodimer.

It is found in the cytoplasm. It carries out the reaction 3-dehydro-L-gulonate + NAD(+) = 2,3-dioxo-L-gulonate + NADH + H(+). It catalyses the reaction 3-dehydro-L-gulonate + NADP(+) = 2,3-dioxo-L-gulonate + NADPH + H(+). Its function is as follows. Catalyzes the reduction of 2,3-diketo-L-gulonate in the presence of NADH, to form 3-keto-L-gulonate. This Salmonella agona (strain SL483) protein is 2,3-diketo-L-gulonate reductase.